A 1228-amino-acid chain; its full sequence is DNA-directed RNA polymerase subunit beta (1228 aa).

Residues 1175-1204 (ESVDEDEQPQGLGAFEIGGDEIEEDKEDDK) are disordered. Residues 1192–1202 (GGDEIEEDKED) show a composition bias toward acidic residues.

This sequence belongs to the RNA polymerase beta chain family. The RNAP catalytic core consists of 2 alpha, 1 beta, 1 beta' and 1 omega subunit. When a sigma factor is associated with the core the holoenzyme is formed, which can initiate transcription.

It carries out the reaction RNA(n) + a ribonucleoside 5'-triphosphate = RNA(n+1) + diphosphate. Its function is as follows. DNA-dependent RNA polymerase catalyzes the transcription of DNA into RNA using the four ribonucleoside triphosphates as substrates. The polypeptide is DNA-directed RNA polymerase subunit beta (Caldicellulosiruptor bescii (strain ATCC BAA-1888 / DSM 6725 / KCTC 15123 / Z-1320) (Anaerocellum thermophilum)).